Here is a 241-residue protein sequence, read N- to C-terminus: Pyridoxine 5'-phosphate synthase (241 aa).

Asparagine 10 contributes to the 3-amino-2-oxopropyl phosphate binding site. A 1-deoxy-D-xylulose 5-phosphate-binding site is contributed by 12-13 (DH). Residue arginine 21 coordinates 3-amino-2-oxopropyl phosphate. The active-site Proton acceptor is histidine 48. The 1-deoxy-D-xylulose 5-phosphate site is built by arginine 50 and histidine 55. Glutamate 75 functions as the Proton acceptor in the catalytic mechanism. Threonine 105 is a binding site for 1-deoxy-D-xylulose 5-phosphate. The Proton donor role is filled by histidine 195. 3-amino-2-oxopropyl phosphate contacts are provided by residues glycine 196 and 217–218 (GH).

It belongs to the PNP synthase family. In terms of assembly, homooctamer; tetramer of dimers.

The protein localises to the cytoplasm. It carries out the reaction 3-amino-2-oxopropyl phosphate + 1-deoxy-D-xylulose 5-phosphate = pyridoxine 5'-phosphate + phosphate + 2 H2O + H(+). The protein operates within cofactor biosynthesis; pyridoxine 5'-phosphate biosynthesis; pyridoxine 5'-phosphate from D-erythrose 4-phosphate: step 5/5. In terms of biological role, catalyzes the complicated ring closure reaction between the two acyclic compounds 1-deoxy-D-xylulose-5-phosphate (DXP) and 3-amino-2-oxopropyl phosphate (1-amino-acetone-3-phosphate or AAP) to form pyridoxine 5'-phosphate (PNP) and inorganic phosphate. The chain is Pyridoxine 5'-phosphate synthase from Bdellovibrio bacteriovorus (strain ATCC 15356 / DSM 50701 / NCIMB 9529 / HD100).